A 2073-amino-acid chain; its full sequence is Non-reducing polyketide synthase cla3 (2073 aa).

Residues 9–242 (LLFGDYTEPW…EKLNIHALQH (234 aa)) form an N-terminal acylcarrier protein transacylase domain (SAT) region. Residues 363–793 (SGRIAIVGMS…GGNGCLLLEE (431 aa)) form the Ketosynthase family 3 (KS3) domain. Residues Cys538, His673, and His712 each act as for beta-ketoacyl synthase activity in the active site. The interval 898–1198 (TFTGQGSQYA…KIMSTLDATG (301 aa)) is malonyl-CoA:ACP transacylase (MAT) domain. Ser987 acts as the For acyl/malonyl transferase activity in catalysis. Residues 1276 to 1590 (STCAQYVITE…QNVILERLLG (315 aa)) form a product template (PT) domain region. The tract at residues 1279 to 1420 (AQYVITETKT…AGLESQWEKS (142 aa)) is N-terminal hotdog fold. The 308-residue stretch at 1279–1586 (AQYVITETKT…FHRVQNVILE (308 aa)) folds into the PKS/mFAS DH domain. His1311 (proton acceptor; for dehydratase activity) is an active-site residue. Positions 1439-1586 (QGHRIQRDIY…FHRVQNVILE (148 aa)) are C-terminal hotdog fold. The active-site Proton donor; for dehydratase activity is the Asp1500. Residues 1594 to 1637 (SSSVPAQASDPLRSKRSPQEARSLPGEAKTEKPGSTIATTSPVL) are disordered. Residues 1641–1718 (KSEQGMFQAL…NLRCAFDEDV (78 aa)) form the Carrier domain. O-(pantetheine 4'-phosphoryl)serine is present on Ser1678. The segment covering 1721 to 1738 (EFTDSEVTSGTPNSSESV) has biased composition (polar residues). Residues 1721–1786 (EFTDSEVTSG…GVLDDGSPQP (66 aa)) form a disordered region. A compositionally biased stretch (basic and acidic residues) spans 1747–1774 (PEEHAFKEPKDDSPLARRDMDNSNDRSL). The interval 1805-1950 (FLIADGSGSI…MQQHLRAIFK (146 aa)) is thioesterase (TE) domain. The For thioesterase activity role is filled by His2058.

Its pathway is secondary metabolite biosynthesis. In terms of biological role, highly reducing polyketide synthase; part of the gene cluster that mediates the biosynthesis of cladosporin, a tricyclic octaketide that acts as an antimalarial agent though inhibition of the Plasmodium falciparum lysyl-tRNA synthetase. The highly reducing polyketide synthase cla2 is responsible for biosynthesis up to the pentaketide stage, including of the tetrahydropyran (THP) ring, whereas the three subsequent ketide extensions with no reduction are catalyzed by the non-reducing polyketide synthase cla3. The chain is Non-reducing polyketide synthase cla3 from Cladosporium cladosporioides.